A 396-amino-acid polypeptide reads, in one-letter code: Tryptophan synthase beta chain (396 aa).

Lysine 86 bears the N6-(pyridoxal phosphate)lysine mark.

The protein belongs to the TrpB family. As to quaternary structure, tetramer of two alpha and two beta chains. Requires pyridoxal 5'-phosphate as cofactor.

It catalyses the reaction (1S,2R)-1-C-(indol-3-yl)glycerol 3-phosphate + L-serine = D-glyceraldehyde 3-phosphate + L-tryptophan + H2O. It participates in amino-acid biosynthesis; L-tryptophan biosynthesis; L-tryptophan from chorismate: step 5/5. Functionally, the beta subunit is responsible for the synthesis of L-tryptophan from indole and L-serine. The sequence is that of Tryptophan synthase beta chain from Francisella tularensis subsp. holarctica (strain FTNF002-00 / FTA).